Reading from the N-terminus, the 260-residue chain is MALRRPMVAGNWKMNGSAALAQELFKKFASKLQNDSAEVVLCPPSIYLESVRQLLEANKEALDGSLVRMGAQNLSQHDFGAYTGEVSGQMLKDCGCRYVIIGHSERRRMYGETSNIVAEKFAAAQKHGLTPILCVGESGPAREARRTFEVIAEELDIVIQKNGTMAFDNAIIAYEPLWAVGTGKSATPEQAQEVHAFIRKRLSEVSPFIGENIRILYGGSVTPSNAADLFAQPDVDGGLIGGASLNSSEFLSLCTIAMSA.

11-13 (NWK) contacts substrate. Residue H103 is the Electrophile of the active site. E175 functions as the Proton acceptor in the catalytic mechanism. Residues G181, S220, and 241-242 (GG) contribute to the substrate site.

Belongs to the triosephosphate isomerase family. Homodimer.

The protein resides in the cytoplasm. It catalyses the reaction D-glyceraldehyde 3-phosphate = dihydroxyacetone phosphate. It functions in the pathway carbohydrate biosynthesis; gluconeogenesis. The protein operates within carbohydrate degradation; glycolysis; D-glyceraldehyde 3-phosphate from glycerone phosphate: step 1/1. In terms of biological role, involved in the gluconeogenesis. Catalyzes stereospecifically the conversion of dihydroxyacetone phosphate (DHAP) to D-glyceraldehyde-3-phosphate (G3P). This chain is Triosephosphate isomerase, found in Shewanella sp. (strain MR-4).